Here is a 427-residue protein sequence, read N- to C-terminus: Serine--tRNA ligase (427 aa).

235–237 (TSE) serves as a coordination point for L-serine. 266–268 (RSE) is a binding site for ATP. Glu289 serves as a coordination point for L-serine. 353 to 356 (EISS) provides a ligand contact to ATP. Ser388 contributes to the L-serine binding site.

The protein belongs to the class-II aminoacyl-tRNA synthetase family. Type-1 seryl-tRNA synthetase subfamily. As to quaternary structure, homodimer. The tRNA molecule binds across the dimer.

Its subcellular location is the cytoplasm. The enzyme catalyses tRNA(Ser) + L-serine + ATP = L-seryl-tRNA(Ser) + AMP + diphosphate + H(+). It catalyses the reaction tRNA(Sec) + L-serine + ATP = L-seryl-tRNA(Sec) + AMP + diphosphate + H(+). The protein operates within aminoacyl-tRNA biosynthesis; selenocysteinyl-tRNA(Sec) biosynthesis; L-seryl-tRNA(Sec) from L-serine and tRNA(Sec): step 1/1. Catalyzes the attachment of serine to tRNA(Ser). Is also able to aminoacylate tRNA(Sec) with serine, to form the misacylated tRNA L-seryl-tRNA(Sec), which will be further converted into selenocysteinyl-tRNA(Sec). This is Serine--tRNA ligase from Chromobacterium violaceum (strain ATCC 12472 / DSM 30191 / JCM 1249 / CCUG 213 / NBRC 12614 / NCIMB 9131 / NCTC 9757 / MK).